A 176-amino-acid chain; its full sequence is Ribosome rescue factor SmrB (176 aa).

The Smr domain occupies 97–172 (LDMHGMTQQE…GNGALLVLID (76 aa)).

This sequence belongs to the SmrB family. In terms of assembly, associates with collided ribosomes, but not with correctly translating polysomes.

In terms of biological role, acts as a ribosome collision sensor. Detects stalled/collided disomes (pairs of ribosomes where the leading ribosome is stalled and a second ribosome has collided with it) and endonucleolytically cleaves mRNA at the 5' boundary of the stalled ribosome. Stalled/collided disomes form a new interface (primarily via the 30S subunits) that binds SmrB. Cleaved mRNA becomes available for tmRNA ligation, leading to ribosomal subunit dissociation and rescue of stalled ribosomes. This is Ribosome rescue factor SmrB from Photobacterium profundum (strain SS9).